The following is a 148-amino-acid chain: Lysozyme-like protein 2 (148 aa).

The first 19 residues, 1–19, serve as a signal peptide directing secretion; the sequence is MKAAGILTLIGCLVTGAES. The C-type lysozyme domain maps to 20–148; that stretch reads KIYTRCKLAK…SDWKKDCEVS (129 aa). Intrachain disulfides connect Cys-25–Cys-145, Cys-49–Cys-133, Cys-83–Cys-98, and Cys-94–Cys-112. The active site involves Glu-54. Asn-58 carries an N-linked (GlcNAc...) asparagine glycan. The active site involves Asp-71.

This sequence belongs to the glycosyl hydrolase 22 family. Monomer. In terms of tissue distribution, expressed in testis, epididymis and placenta.

It localises to the secreted. It carries out the reaction Hydrolysis of (1-&gt;4)-beta-linkages between N-acetylmuramic acid and N-acetyl-D-glucosamine residues in a peptidoglycan and between N-acetyl-D-glucosamine residues in chitodextrins.. This Homo sapiens (Human) protein is Lysozyme-like protein 2 (LYZL2).